The sequence spans 353 residues: Variable large protein 17 (353 aa).

The N-terminal stretch at 1–18 (MRKRISAIIMTLFMVLVS) is a signal peptide. Cys19 carries the N-palmitoyl cysteine lipid modification. Cys19 carries S-diacylglycerol cysteine lipidation. The tract at residues 332–353 (EDKSVEATNTAEATTSGQQAKN) is disordered. Residues 337–353 (EATNTAEATTSGQQAKN) show a composition bias toward polar residues.

Belongs to the variable large protein (Vlp) family. Delta subfamily.

The protein resides in the cell outer membrane. Its function is as follows. The Vlp and Vsp proteins are antigenically distinct proteins, only one vlp or vsp gene is transcriptionally active at any one time. Switching between these genes is a mechanism of host immune response evasion. This chain is Variable large protein 17, found in Borrelia hermsii.